The following is a 555-amino-acid chain: 6-phosphofructo-2-kinase/fructose-2,6-bisphosphatase 3 (555 aa).

The interval 1–245 is 6-phosphofructo-2-kinase; it reads MPLELTQSRV…VYYLMNIHVQ (245 aa). 42–50 contributes to the ATP binding site; that stretch reads GLPARGKTY. Residues R75 and R99 each coordinate beta-D-fructose 6-phosphate. D125 is an active-site residue. 2 residues coordinate beta-D-fructose 6-phosphate: T127 and R133. The active site involves C155. Position 164–169 (164–169) interacts with ATP; sequence NIMEVK. K169, R190, and Y194 together coordinate beta-D-fructose 6-phosphate. Positions 246–555 are fructose-2,6-bisphosphatase; sequence PRTIYLCRHG…CHIFSKFSPY (310 aa). A beta-D-fructose 2,6-bisphosphate-binding site is contributed by R253. The active-site Tele-phosphohistidine intermediate is the H254. Residues N260 and G266 each contribute to the beta-D-fructose 2,6-bisphosphate site. E323 functions as the Proton donor/acceptor in the catalytic mechanism. The beta-D-fructose 2,6-bisphosphate site is built by Y334, R348, K352, Y363, Q389, and R393. 345–348 serves as a coordination point for ATP; the sequence is YALR. Residues 389 to 393 and Y425 each bind ATP; that span reads QAVLR. A disordered region spans residues 475–504; it reads KQDAKKGPNPLMRRNSVTPLASPEPTKKPR. Residue S490 is modified to Phosphoserine; by AMPK and PKA. T492 is subject to Phosphothreonine. Phosphoserine is present on S496.

In the C-terminal section; belongs to the phosphoglycerate mutase family. As to quaternary structure, homodimer. Forms a heterodimer with PFKFB2. Phosphorylation by AMPK stimulates activity.

It carries out the reaction beta-D-fructose 2,6-bisphosphate + H2O = beta-D-fructose 6-phosphate + phosphate. The catalysed reaction is beta-D-fructose 6-phosphate + ATP = beta-D-fructose 2,6-bisphosphate + ADP + H(+). Its function is as follows. Catalyzes both the synthesis and degradation of fructose 2,6-bisphosphate. This Rattus norvegicus (Rat) protein is 6-phosphofructo-2-kinase/fructose-2,6-bisphosphatase 3 (Pfkfb3).